The primary structure comprises 618 residues: 1-deoxy-D-xylulose-5-phosphate synthase (618 aa).

Thiamine diphosphate is bound by residues His-72 and 113–115; that span reads GHA. Mg(2+) is bound at residue Asp-144. Thiamine diphosphate is bound by residues 145-146, Asn-173, His-284, and Glu-359; that span reads GA. Asn-173 serves as a coordination point for Mg(2+).

It belongs to the transketolase family. DXPS subfamily. In terms of assembly, homodimer. The cofactor is Mg(2+). Thiamine diphosphate serves as cofactor.

The enzyme catalyses D-glyceraldehyde 3-phosphate + pyruvate + H(+) = 1-deoxy-D-xylulose 5-phosphate + CO2. The protein operates within metabolic intermediate biosynthesis; 1-deoxy-D-xylulose 5-phosphate biosynthesis; 1-deoxy-D-xylulose 5-phosphate from D-glyceraldehyde 3-phosphate and pyruvate: step 1/1. Catalyzes the acyloin condensation reaction between C atoms 2 and 3 of pyruvate and glyceraldehyde 3-phosphate to yield 1-deoxy-D-xylulose-5-phosphate (DXP). The chain is 1-deoxy-D-xylulose-5-phosphate synthase from Dictyoglomus thermophilum (strain ATCC 35947 / DSM 3960 / H-6-12).